The primary structure comprises 336 residues: Heat-inducible transcription repressor HrcA (336 aa).

It belongs to the HrcA family.

Negative regulator of class I heat shock genes (grpE-dnaK-dnaJ and groELS operons). Prevents heat-shock induction of these operons. The sequence is that of Heat-inducible transcription repressor HrcA from Variovorax paradoxus (strain S110).